We begin with the raw amino-acid sequence, 344 residues long: 4-hydroxy-3-methylbut-2-en-1-yl diphosphate synthase (flavodoxin) (344 aa).

Positions 253, 256, 288, and 295 each coordinate [4Fe-4S] cluster.

This sequence belongs to the IspG family. [4Fe-4S] cluster serves as cofactor.

The catalysed reaction is (2E)-4-hydroxy-3-methylbut-2-enyl diphosphate + oxidized [flavodoxin] + H2O + 2 H(+) = 2-C-methyl-D-erythritol 2,4-cyclic diphosphate + reduced [flavodoxin]. It functions in the pathway isoprenoid biosynthesis; isopentenyl diphosphate biosynthesis via DXP pathway; isopentenyl diphosphate from 1-deoxy-D-xylulose 5-phosphate: step 5/6. Its function is as follows. Converts 2C-methyl-D-erythritol 2,4-cyclodiphosphate (ME-2,4cPP) into 1-hydroxy-2-methyl-2-(E)-butenyl 4-diphosphate. The polypeptide is 4-hydroxy-3-methylbut-2-en-1-yl diphosphate synthase (flavodoxin) (Thermotoga petrophila (strain ATCC BAA-488 / DSM 13995 / JCM 10881 / RKU-1)).